A 37-amino-acid polypeptide reads, in one-letter code: MKVSPSVKRICENCRVIRRHGRVMVICVNPRHKQRQG.

Belongs to the bacterial ribosomal protein bL36 family.

This chain is Large ribosomal subunit protein bL36, found in Bifidobacterium adolescentis (strain ATCC 15703 / DSM 20083 / NCTC 11814 / E194a).